Consider the following 406-residue polypeptide: MTQTLDTREDPLNLGGGGGGGCGCGWAHSASLSSWSSCHRRRPGAPAYNRPHRYSPKTEYGPPRKQPKQQHGPGFWFQPPVCSNWGCWGGPWRPPPPGFWKFPCPVQVFRVYGLHPLCFCCCSCWSGSWNPGWVKPPGRKKRWGRRGRGLRHHPRHSYPRSPPADVSTLPRPVKLYEWREPGMRAPPNTTQFIMNQIYEDMRQQEKVERQQEALRAQKATVSGEASPARSSGNDAPPGGSKETWGLQETLYGFVQNPSLAFSPNPEENQSLAPLLVEEEEEKKNDDEEEYDQEVCDAKEASEEEEEVEDEEEEVEDEEEEEVEEAEYVEEGEEELEEEELEEEEEVLEENEQRGEEFHLPLEMPLSIFVEAEEKRENFISCTFLNPEQIIPKVPQESLFMAQDFNC.

4 disordered regions span residues 43 to 72, 138 to 167, 203 to 244, and 278 to 358; these read PGAPAYNRPHRYSPKTEYGPPRKQPKQQHG, GRKKRWGRRGRGLRHHPRHSYPRSPPADVS, QQEK…KETW, and EEEE…EEFH. Residues 138–158 are compositionally biased toward basic residues; sequence GRKKRWGRRGRGLRHHPRHSY. Coiled-coil stretches lie at residues 199 to 225 and 274 to 359; these read EDMRQQEKVERQQEALRAQKATVSGEA and LLVE…EFHL. Over residues 203 to 212 the composition is skewed to basic and acidic residues; it reads QQEKVERQQE. Composition is skewed to acidic residues over residues 278-294 and 301-349; these read EEEEKKNDDEEEYDQEV and SEEE…VLEE.

The protein localises to the nucleus. In terms of biological role, regulator of histone epigenetic modifications and chromatin compaction into the sperm head, required for histone-to-protamine (HTP) transition. HTP is a key event in which somatic histones are first replaced by testis-specific histone variants, then transition proteins (TNPs) are incorporated into the spermatid nucleus, and finally protamines (PRMs) replace the TNPs to promote chromatin condensation. The chain is Coiled-coil domain-containing glutamate-rich protein 1 (CCER1) from Homo sapiens (Human).